The following is a 280-amino-acid chain: Band 7 protein AGAP004871 (280 aa).

Residues 23–43 (ILIFLSWVLVVLTMPFSLLVC) traverse the membrane as a helical segment.

The protein belongs to the band 7/mec-2 family.

Its subcellular location is the membrane. This Anopheles gambiae (African malaria mosquito) protein is Band 7 protein AGAP004871.